A 304-amino-acid chain; its full sequence is Large ribosomal subunit protein uL18z (304 aa).

The tract at residues 285–304 (LNALNSSAGADDDDEEEDDE) is disordered. The span at 294 to 304 (ADDDDEEEDDE) shows a compositional bias: acidic residues.

The protein belongs to the universal ribosomal protein uL18 family. As to quaternary structure, component of the large ribosomal subunit (LSU).

Its subcellular location is the cytoplasm. The protein resides in the nucleus. In terms of biological role, component of the ribosome, a large ribonucleoprotein complex responsible for the synthesis of proteins in the cell. The small ribosomal subunit (SSU) binds messenger RNAs (mRNAs) and translates the encoded message by selecting cognate aminoacyl-transfer RNA (tRNA) molecules. The large subunit (LSU) contains the ribosomal catalytic site termed the peptidyl transferase center (PTC), which catalyzes the formation of peptide bonds, thereby polymerizing the amino acids delivered by tRNAs into a polypeptide chain. The nascent polypeptides leave the ribosome through a tunnel in the LSU and interact with protein factors that function in enzymatic processing, targeting, and the membrane insertion of nascent chains at the exit of the ribosomal tunnel. The polypeptide is Large ribosomal subunit protein uL18z (RPL5A) (Oryza sativa subsp. japonica (Rice)).